A 102-amino-acid polypeptide reads, in one-letter code: Large ribosomal subunit protein eL30 (102 aa).

Belongs to the eukaryotic ribosomal protein eL30 family. Part of the 50S ribosomal subunit.

This Thermococcus kodakarensis (strain ATCC BAA-918 / JCM 12380 / KOD1) (Pyrococcus kodakaraensis (strain KOD1)) protein is Large ribosomal subunit protein eL30.